Here is a 147-residue protein sequence, read N- to C-terminus: Cilia- and flagella-associated protein 90 (147 aa).

The disordered stretch occupies residues 1-36 (MEDDEEETTASTLRGKPRPPPVSAQSAFSYIPPRRL).

Microtubule inner protein component of sperm flagellar doublet microtubules.

The protein localises to the cytoplasm. It is found in the cytoskeleton. Its subcellular location is the cilium axoneme. It localises to the flagellum axoneme. Its function is as follows. Microtubule inner protein (MIP) part of the dynein-decorated doublet microtubules (DMTs) in cilia axoneme, which is required for motile cilia beating. This is Cilia- and flagella-associated protein 90 from Homo sapiens (Human).